The primary structure comprises 355 residues: Anhydro-N-acetylmuramic acid kinase (355 aa).

ATP is bound at residue 9-16; it reads GTSLDGVD.

Belongs to the anhydro-N-acetylmuramic acid kinase family.

The catalysed reaction is 1,6-anhydro-N-acetyl-beta-muramate + ATP + H2O = N-acetyl-D-muramate 6-phosphate + ADP + H(+). It participates in amino-sugar metabolism; 1,6-anhydro-N-acetylmuramate degradation. Its pathway is cell wall biogenesis; peptidoglycan recycling. Catalyzes the specific phosphorylation of 1,6-anhydro-N-acetylmuramic acid (anhMurNAc) with the simultaneous cleavage of the 1,6-anhydro ring, generating MurNAc-6-P. Is required for the utilization of anhMurNAc either imported from the medium or derived from its own cell wall murein, and thus plays a role in cell wall recycling. This chain is Anhydro-N-acetylmuramic acid kinase, found in Paramagnetospirillum magneticum (strain ATCC 700264 / AMB-1) (Magnetospirillum magneticum).